A 368-amino-acid chain; its full sequence is Propane 2-monooxygenase, hydroxylase component small subunit (368 aa).

It belongs to the TmoE/XamoE family. In terms of assembly, the propane 2-monooxygenase multicomponent enzyme system is composed of an electron transfer component and a monooxygenase component interacting with the effector protein PrmD. The electron transfer component is composed of a reductase (PrmB), and the monooxygenase component is formed by a large subunit (PrmA) and a small subunit (PrmC). Probably requires the presence of the chaperonin-like protein PrmG to ensure a productive folding, resulting of a soluble PrmC, which leads to the active form of PrmABCD.

The enzyme catalyses propane + NADH + O2 + H(+) = propan-2-ol + NAD(+) + H2O. Its function is as follows. Component of the propane 2-monooxygenase multicomponent enzyme system which is involved in the degradation of propane via the O2-dependent hydroxylation of propane. Also able to catalyze the oxidation the water contaminant N-nitrosodimethylamine (NDMA). This chain is Propane 2-monooxygenase, hydroxylase component small subunit, found in Rhodococcus jostii (strain RHA1).